The chain runs to 421 residues: Trimethyllysine dioxygenase, mitochondrial (421 aa).

The N-terminal 15 residues, 1 to 15 (MWYHKLLHQQSRLQN), are a transit peptide targeting the mitochondrion. An N6-acetyllysine mark is found at lysine 179 and lysine 236. The Fe cation site is built by histidine 242, aspartate 244, and histidine 389.

This sequence belongs to the gamma-BBH/TMLD family. As to quaternary structure, homodimer. The cofactor is Fe(2+). L-ascorbate serves as cofactor.

It is found in the mitochondrion matrix. The enzyme catalyses N(6),N(6),N(6)-trimethyl-L-lysine + 2-oxoglutarate + O2 = (3S)-3-hydroxy-N(6),N(6),N(6)-trimethyl-L-lysine + succinate + CO2. The protein operates within amine and polyamine biosynthesis; carnitine biosynthesis. In terms of biological role, converts trimethyllysine (TML) into hydroxytrimethyllysine (HTML). The protein is Trimethyllysine dioxygenase, mitochondrial (Tmlhe) of Rattus norvegicus (Rat).